The sequence spans 542 residues: Glucans biosynthesis protein G (542 aa).

The N-terminal stretch at 1–34 (MVSLLRCPSSKPYSSLICSLTLGAVVALSGVAYA) is a signal peptide.

The protein belongs to the OpgD/OpgG family.

The protein localises to the periplasm. It functions in the pathway glycan metabolism; osmoregulated periplasmic glucan (OPG) biosynthesis. In terms of biological role, involved in the biosynthesis of osmoregulated periplasmic glucans (OPGs). In Shewanella baltica (strain OS155 / ATCC BAA-1091), this protein is Glucans biosynthesis protein G.